A 648-amino-acid chain; its full sequence is PTS system N-acetylglucosamine-specific EIICBA component (648 aa).

M1 is modified (N-formylmethionine). The PTS EIIC type-1 domain occupies 1 to 371; it reads MNILGFFQRL…FNLKTPGRED (371 aa). Helical transmembrane passes span 16-36, 38-58, 70-90, 92-112, 132-152, 159-179, 192-212, 232-252, 260-280, 282-302, 303-323, and 339-359; these read LPIA…PDLL, VAFI…IFAI, GAAA…MVTI, PEIN…GAAY, FVPI…GYVW, IHAG…IFGF, VLNT…GTVF, GFFP…YFAA, VGGM…TEPL, FLFM…TGIS, LFVA…GAID, and MLLV…SLVI. One can recognise a PTS EIIB type-1 domain in the interval 390–472; it reads TQLATNYIAA…KKVVARGPVA (83 aa). Residue C412 is the Phosphocysteine intermediate; for EIIB activity of the active site. Phosphocysteine; by EIIA is present on C412. The PTS EIIA type-1 domain occupies 517-621; it reads DEAFASKAVG…SMISPVVCSN (105 aa). Residues H554 and H569 each contribute to the Zn(2+) site. The active-site Tele-phosphohistidine intermediate; for EIIA activity is the H569. The residue at position 569 (H569) is a Phosphohistidine; by HPr.

Requires Zn(2+) as cofactor. In terms of processing, 60% of isolated protein was N-formylated.

It is found in the cell inner membrane. The enzyme catalyses N(pros)-phospho-L-histidyl-[protein] + N-acetyl-D-glucosamine(out) = N-acetyl-D-glucosamine 6-phosphate(in) + L-histidyl-[protein]. Its activity is regulated as follows. P-chloromercuribenzoate inhibits the accumulation of both N-acetyl-D-glucosamine and antibiotic streptozotocin (2-deoxy-2-(3-methyl-3-nitrosoureido)-D-glucopyranose). N-acetyl-D-glucosamine is a competitive inhibitor for the uptake of streptozotocin. Its function is as follows. The phosphoenolpyruvate-dependent sugar phosphotransferase system (sugar PTS), a major carbohydrate active transport system, catalyzes the phosphorylation of incoming sugar substrates concomitantly with their translocation across the cell membrane. This system is involved in N-acetylglucosamine transport. It can also transport and phosphorylate the antibiotic streptozotocin. Could play a significant role in the recycling of peptidoglycan. The chain is PTS system N-acetylglucosamine-specific EIICBA component from Escherichia coli (strain K12).